A 246-amino-acid chain; its full sequence is Small ribosomal subunit protein uS2 (246 aa).

Belongs to the universal ribosomal protein uS2 family.

This chain is Small ribosomal subunit protein uS2, found in Dictyoglomus thermophilum (strain ATCC 35947 / DSM 3960 / H-6-12).